The sequence spans 430 residues: L-cysteine:1D-myo-inositol 2-amino-2-deoxy-alpha-D-glucopyranoside ligase (430 aa).

Cysteine 48 contacts Zn(2+). L-cysteinyl-5'-AMP is bound by residues 48-51 (CGIT), threonine 63, and 86-88 (NIT). The 'HIGH' region motif lies at 50-60 (ITPYDSTHLGH). Positions 192-197 (ERGGDP) match the 'ERGGDP' region motif. Tryptophan 232 contributes to the L-cysteinyl-5'-AMP binding site. Cysteine 236 provides a ligand contact to Zn(2+). 254–256 (GSD) contributes to the L-cysteinyl-5'-AMP binding site. Histidine 261 contacts Zn(2+). Isoleucine 288 serves as a coordination point for L-cysteinyl-5'-AMP. Positions 294–298 (KMSKS) match the 'KMSKS' region motif.

Belongs to the class-I aminoacyl-tRNA synthetase family. MshC subfamily. In terms of assembly, monomer. It depends on Zn(2+) as a cofactor.

The catalysed reaction is 1D-myo-inositol 2-amino-2-deoxy-alpha-D-glucopyranoside + L-cysteine + ATP = 1D-myo-inositol 2-(L-cysteinylamino)-2-deoxy-alpha-D-glucopyranoside + AMP + diphosphate + H(+). Its function is as follows. Catalyzes the ATP-dependent condensation of GlcN-Ins and L-cysteine to form L-Cys-GlcN-Ins. This chain is L-cysteine:1D-myo-inositol 2-amino-2-deoxy-alpha-D-glucopyranoside ligase (mshC), found in Corynebacterium efficiens (strain DSM 44549 / YS-314 / AJ 12310 / JCM 11189 / NBRC 100395).